The following is a 296-amino-acid chain: Stanniocalcin-2 (296 aa).

Residues 1–24 (MCAERLGQFVTLALVFATLDPAQG) form the signal peptide. The interval 21–44 (PAQGTDSTNPPEGPQDRSSQQKGR) is disordered. A compositionally biased stretch (polar residues) spans 24 to 44 (GTDSTNPPEGPQDRSSQQKGR). N73 is a glycosylation site (N-linked (GlcNAc...) asparagine). Residues 218–296 (PPTAAPEHQP…EQSEYSDIRR (79 aa)) are disordered. The segment covering 240 to 258 (RDTDHHLTANRGAKGERGS) has biased composition (basic and acidic residues). Over residues 272 to 282 (GQSAQGPSGSS) the composition is skewed to low complexity.

This sequence belongs to the stanniocalcin family. As to quaternary structure, homodimer; disulfide-linked. As to expression, found in a variety of tissues including skeletal muscle, small intestine, kidney, liver and brain.

It localises to the secreted. In terms of biological role, has an anti-hypocalcemic action on calcium and phosphate homeostasis. The chain is Stanniocalcin-2 (Stc2) from Mus musculus (Mouse).